We begin with the raw amino-acid sequence, 358 residues long: UDP-N-acetylglucosamine--N-acetylmuramyl-(pentapeptide) pyrophosphoryl-undecaprenol N-acetylglucosamine transferase (358 aa).

UDP-N-acetyl-alpha-D-glucosamine is bound by residues 11–13 (TGG), asparagine 120, arginine 161, serine 188, and glutamine 282.

Belongs to the glycosyltransferase 28 family. MurG subfamily.

The protein resides in the cell inner membrane. It carries out the reaction di-trans,octa-cis-undecaprenyl diphospho-N-acetyl-alpha-D-muramoyl-L-alanyl-D-glutamyl-meso-2,6-diaminopimeloyl-D-alanyl-D-alanine + UDP-N-acetyl-alpha-D-glucosamine = di-trans,octa-cis-undecaprenyl diphospho-[N-acetyl-alpha-D-glucosaminyl-(1-&gt;4)]-N-acetyl-alpha-D-muramoyl-L-alanyl-D-glutamyl-meso-2,6-diaminopimeloyl-D-alanyl-D-alanine + UDP + H(+). The protein operates within cell wall biogenesis; peptidoglycan biosynthesis. Cell wall formation. Catalyzes the transfer of a GlcNAc subunit on undecaprenyl-pyrophosphoryl-MurNAc-pentapeptide (lipid intermediate I) to form undecaprenyl-pyrophosphoryl-MurNAc-(pentapeptide)GlcNAc (lipid intermediate II). This is UDP-N-acetylglucosamine--N-acetylmuramyl-(pentapeptide) pyrophosphoryl-undecaprenol N-acetylglucosamine transferase from Synechococcus sp. (strain CC9311).